Reading from the N-terminus, the 727-residue chain is Catalase-peroxidase (727 aa).

The disordered stretch occupies residues Met1 to Asp26. Polar residues predominate over residues Gly11–Asp26. The segment at residues Trp96–Tyr219 is a cross-link (tryptophyl-tyrosyl-methioninium (Trp-Tyr) (with M-245)). His97 functions as the Proton acceptor in the catalytic mechanism. Positions Tyr219 to Met245 form a cross-link, tryptophyl-tyrosyl-methioninium (Tyr-Met) (with W-96). Heme b is bound at residue His260. The segment covering Ser346–Lys362 has biased composition (basic and acidic residues). The segment at Ser346–Pro365 is disordered.

This sequence belongs to the peroxidase family. Peroxidase/catalase subfamily. Homodimer or homotetramer. Requires heme b as cofactor. In terms of processing, formation of the three residue Trp-Tyr-Met cross-link is important for the catalase, but not the peroxidase activity of the enzyme.

It carries out the reaction H2O2 + AH2 = A + 2 H2O. The catalysed reaction is 2 H2O2 = O2 + 2 H2O. Functionally, bifunctional enzyme with both catalase and broad-spectrum peroxidase activity. This chain is Catalase-peroxidase, found in Maridesulfovibrio salexigens (strain ATCC 14822 / DSM 2638 / NCIMB 8403 / VKM B-1763) (Desulfovibrio salexigens).